The following is a 135-amino-acid chain: Ribosomal RNA large subunit methyltransferase H (135 aa).

Residues L52, G83, and 102–107 each bind S-adenosyl-L-methionine; that span reads LSSLTL.

Belongs to the RNA methyltransferase RlmH family. As to quaternary structure, homodimer.

The protein resides in the cytoplasm. The enzyme catalyses pseudouridine(1915) in 23S rRNA + S-adenosyl-L-methionine = N(3)-methylpseudouridine(1915) in 23S rRNA + S-adenosyl-L-homocysteine + H(+). Functionally, specifically methylates the pseudouridine at position 1915 (m3Psi1915) in 23S rRNA. This chain is Ribosomal RNA large subunit methyltransferase H, found in Polynucleobacter necessarius subsp. necessarius (strain STIR1).